Reading from the N-terminus, the 120-residue chain is Large ribosomal subunit protein uL18 (120 aa).

The protein belongs to the universal ribosomal protein uL18 family. As to quaternary structure, part of the 50S ribosomal subunit; part of the 5S rRNA/L5/L18/L25 subcomplex. Contacts the 5S and 23S rRNAs.

Functionally, this is one of the proteins that bind and probably mediate the attachment of the 5S RNA into the large ribosomal subunit, where it forms part of the central protuberance. In Bradyrhizobium sp. (strain ORS 278), this protein is Large ribosomal subunit protein uL18.